Consider the following 99-residue polypeptide: U1-theraphotoxin-Lsp1a (99 aa).

A signal peptide spans methionine 1–alanine 23. Positions alanine 24 to arginine 50 are excised as a propeptide. 4 cysteine pairs are disulfide-bonded: cysteine 54-cysteine 67, cysteine 58-cysteine 91, cysteine 72-cysteine 74, and cysteine 85-cysteine 96.

The protein belongs to the neurotoxin 12 (Hwtx-2) family. 04 (lasiotoxin) subfamily. In terms of tissue distribution, expressed by the venom gland.

It localises to the secreted. Functionally, toxin that causes irreversible contractile paralysis into adult Aedes aegypti resulting in 100% mortality after 24 hours. The sequence is that of U1-theraphotoxin-Lsp1a from Lasiodora sp. (strain IBSP 8539) (Brazilian salmon pink birdeater).